A 308-amino-acid polypeptide reads, in one-letter code: F420-non-reducing hydrogenase subunit G (308 aa).

The protein belongs to the [NiFe]/[NiFeSe] hydrogenase small subunit family. The F420-non-reducing hydrogenase is composed of three subunits; MvhA, MvhD and MvhG. It forms a complex with the heterodisulfide reductase (hdr).

Part of a complex that provides reducing equivalents for heterodisulfide reductase. The polypeptide is F420-non-reducing hydrogenase subunit G (mvhG) (Methanothermobacter thermautotrophicus (strain ATCC 29096 / DSM 1053 / JCM 10044 / NBRC 100330 / Delta H) (Methanobacterium thermoautotrophicum)).